We begin with the raw amino-acid sequence, 549 residues long: Chaperonin GroEL (549 aa).

Residues 29–32 (TAGP), lysine 50, 86–90 (DGTTT), glycine 418, and aspartate 499 each bind ATP.

The protein belongs to the chaperonin (HSP60) family. In terms of assembly, forms a cylinder of 14 subunits composed of two heptameric rings stacked back-to-back. Interacts with the co-chaperonin GroES.

It is found in the cytoplasm. It catalyses the reaction ATP + H2O + a folded polypeptide = ADP + phosphate + an unfolded polypeptide.. Together with its co-chaperonin GroES, plays an essential role in assisting protein folding. The GroEL-GroES system forms a nano-cage that allows encapsulation of the non-native substrate proteins and provides a physical environment optimized to promote and accelerate protein folding. This chain is Chaperonin GroEL, found in Wolbachia pipientis wMel.